The following is a 211-amino-acid chain: HTH-type transcriptional repressor FabR (211 aa).

The HTH tetR-type domain maps to 10-70 (RTRRSLVEAA…TMVDESGLML (61 aa)). Positions 33–52 (SLREVAREAGIAPTSFYRHF) form a DNA-binding region, H-T-H motif.

Homodimer.

It is found in the cytoplasm. Represses the transcription of fabB, involved in unsaturated fatty acid (UFA) biosynthesis. By controlling UFA production, FabR directly influences the physical properties of the membrane bilayer. This chain is HTH-type transcriptional repressor FabR, found in Cronobacter sakazakii (strain ATCC BAA-894) (Enterobacter sakazakii).